A 196-amino-acid chain; its full sequence is UMP-CMP kinase (196 aa).

ATP is bound at residue 13 to 18; it reads GAGKGT. Phosphoserine is present on serine 33. Residues 33-63 form an NMP region; it reads SAGELLRDERKNPDSQYGELIEKYIKEGKIV. Arginine 39 provides a ligand contact to a ribonucleoside 5'-phosphate. Residues lysine 43 and lysine 55 each carry the N6-acetyllysine modification. 61–63 provides a ligand contact to a ribonucleoside 5'-phosphate; it reads KIV. A Glycyl lysine isopeptide (Lys-Gly) (interchain with G-Cter in SUMO2) cross-link involves residue lysine 73. 93–96 is an a ribonucleoside 5'-phosphate binding site; the sequence is GFPR. Asparagine 100 contributes to the CMP binding site. Residue lysine 106 is modified to N6-succinyllysine. Residues 133-143 form an LID region; the sequence is ERGKSSGRSDD. Residue arginine 134 participates in ATP binding. A ribonucleoside 5'-phosphate is bound by residues arginine 140 and arginine 151. ATP is bound at residue lysine 179. Serine 180 carries the phosphoserine modification.

The protein belongs to the adenylate kinase family. UMP-CMP kinase subfamily. As to quaternary structure, monomer. The cofactor is Mg(2+).

It localises to the nucleus. Its subcellular location is the cytoplasm. It catalyses the reaction CMP + ATP = CDP + ADP. It carries out the reaction dCMP + ATP = dCDP + ADP. The enzyme catalyses UMP + ATP = UDP + ADP. The catalysed reaction is a 2'-deoxyribonucleoside 5'-diphosphate + ATP = a 2'-deoxyribonucleoside 5'-triphosphate + ADP. It catalyses the reaction a ribonucleoside 5'-diphosphate + ATP = a ribonucleoside 5'-triphosphate + ADP. In terms of biological role, catalyzes the phosphorylation of pyrimidine nucleoside monophosphates at the expense of ATP. Plays an important role in de novo pyrimidine nucleotide biosynthesis. Has preference for UMP and CMP as phosphate acceptors. Also displays broad nucleoside diphosphate kinase activity. The polypeptide is UMP-CMP kinase (Cmpk1) (Rattus norvegicus (Rat)).